Reading from the N-terminus, the 286-residue chain is MVAKILDGKQIAKEYRQRLKNQVNDLKEYGFTPKLSVILVGNDGASQSYVKSKKKAAEKIGMISEIIHLDESTSEEVVLSELNRLNNDDTVSGILVQVPLPKQVSEQKVLEAINPEKDVDGFHPINIGKLYIDEQTFVPCTPLGIMEILKHADINLEGKNAVVIGRSHIVGQPVSKLLLQANATVTILHSRTKNMNAHLKQADVIVSAVGQPGLVTKENVKKGAVIIDVGNTPDENGKLKGDVAYDEVKEIASAITPVPGGVGPLTITMVLNNTLLAEKLRRGLTK.

Residues 165–167 (GRS) and serine 190 contribute to the NADP(+) site.

This sequence belongs to the tetrahydrofolate dehydrogenase/cyclohydrolase family. In terms of assembly, homodimer.

It carries out the reaction (6R)-5,10-methylene-5,6,7,8-tetrahydrofolate + NADP(+) = (6R)-5,10-methenyltetrahydrofolate + NADPH. The catalysed reaction is (6R)-5,10-methenyltetrahydrofolate + H2O = (6R)-10-formyltetrahydrofolate + H(+). It functions in the pathway one-carbon metabolism; tetrahydrofolate interconversion. Its function is as follows. Catalyzes the oxidation of 5,10-methylenetetrahydrofolate to 5,10-methenyltetrahydrofolate and then the hydrolysis of 5,10-methenyltetrahydrofolate to 10-formyltetrahydrofolate. In Staphylococcus epidermidis (strain ATCC 12228 / FDA PCI 1200), this protein is Bifunctional protein FolD.